We begin with the raw amino-acid sequence, 562 residues long: Protein KASH5 (562 aa).

Over 1–521 the chain is Cytoplasmic; sequence MDLPEGPVGG…PQRLRVTRHP (521 aa). The tract at residues 125 to 153 is disordered; sequence ALTSRQLPSGCPEAEEPANLESFGGEDPR. Residues 164 to 349 are a coiled coil; it reads SSLEDLELSN…LEEQLSQTYE (186 aa). The segment at 407 to 481 is disordered; it reads ETSEETEFPS…DIPENPPERP (75 aa). The span at 431 to 448 shows a compositional bias: basic and acidic residues; the sequence is AHPEEGRKEPSMWLTRRE. Residues 522-542 form a helical; Anchor for type IV membrane protein membrane-spanning segment; it reads LIPAPVLGLLLLLLLSVLLLG. The segment at 541 to 562 is interaction with SUN1; it reads LGPSPPPTWPHLQLCYLQPPPV. Over 543–562 the chain is Perinuclear space; the sequence is PSPPPTWPHLQLCYLQPPPV.

Core component the LINC complex which is composed of inner nuclear membrane SUN domain-containing proteins coupled to outer nuclear membrane KASH domain-containing nesprins. SUN and KASH domain-containing proteins seem to bind each other promiscuously; however, differentially expression of LINC complex constituents is giving rise to specific assemblies. At least SUN1/2-containing core LINC complexes are proposed to be hexameric composed of three protomers of each KASH and SUN domain-containing protein. Interacts with SUN1; this interaction mediates its telomere localization by forming a SUN1:KASH5 LINC complex. Component of a probable SUN2:KASH5 LINC complex. Self-associates. Interacts with DYNC1H1, DCTN1, DYNC1I1/2 and PAFAH1B1; suggesting the association with the dynein-dynactin motor complex. As to expression, expressed in testis (at protein level).

The protein resides in the nucleus outer membrane. The protein localises to the nucleus. Its subcellular location is the chromosome. It is found in the telomere. It localises to the nucleus envelope. Its function is as follows. As a component of the LINC (LInker of Nucleoskeleton and Cytoskeleton) complex, involved in the connection between the nuclear lamina and the cytoskeleton. The nucleocytoplasmic interactions established by the LINC complex play an important role in the transmission of mechanical forces across the nuclear envelope and in nuclear movement and positioning. Required for telomere attachment to nuclear envelope in the prophase of meiosis. Required for rapid telomere prophase movements implicating a SUN1/2:KASH5 LINC complex in which SUN1 and SUN2 seem to act at least partial redundantly. Required for homolog pairing during meiotic prophase in spermatocytes and probably oocytes. Essential for male and female gametogenesis. Recruits cytoplasmic dynein to telomere attachment sites at the nuclear envelope in spermatocytes. In oocytes is involved in meiotic resumption and spindle formation. In Homo sapiens (Human), this protein is Protein KASH5.